The primary structure comprises 460 residues: ATP synthase subunit beta (460 aa).

An ATP-binding site is contributed by 150–157; that stretch reads GGAGVGKT.

Belongs to the ATPase alpha/beta chains family. F-type ATPases have 2 components, CF(1) - the catalytic core - and CF(0) - the membrane proton channel. CF(1) has five subunits: alpha(3), beta(3), gamma(1), delta(1), epsilon(1). CF(0) has three main subunits: a(1), b(2) and c(9-12). The alpha and beta chains form an alternating ring which encloses part of the gamma chain. CF(1) is attached to CF(0) by a central stalk formed by the gamma and epsilon chains, while a peripheral stalk is formed by the delta and b chains.

The protein localises to the cell inner membrane. It catalyses the reaction ATP + H2O + 4 H(+)(in) = ADP + phosphate + 5 H(+)(out). Produces ATP from ADP in the presence of a proton gradient across the membrane. The catalytic sites are hosted primarily by the beta subunits. This chain is ATP synthase subunit beta, found in Serratia proteamaculans (strain 568).